Here is a 365-residue protein sequence, read N- to C-terminus: D-alanine--D-alanine ligase (365 aa).

The 207-residue stretch at lysine 140 to tyrosine 346 folds into the ATP-grasp domain. Glutamate 173–glutamate 228 lines the ATP pocket. Mg(2+)-binding residues include aspartate 299, glutamate 313, and asparagine 315.

This sequence belongs to the D-alanine--D-alanine ligase family. It depends on Mg(2+) as a cofactor. Mn(2+) is required as a cofactor.

Its subcellular location is the cytoplasm. The catalysed reaction is 2 D-alanine + ATP = D-alanyl-D-alanine + ADP + phosphate + H(+). It functions in the pathway cell wall biogenesis; peptidoglycan biosynthesis. Its function is as follows. Cell wall formation. The polypeptide is D-alanine--D-alanine ligase (Natranaerobius thermophilus (strain ATCC BAA-1301 / DSM 18059 / JW/NM-WN-LF)).